The sequence spans 501 residues: Dynein regulatory complex subunit 5 (501 aa).

The segment covering 1 to 23 has biased composition (polar residues); it reads MQETVTTSALLDPSHSSVSTQDK. Disordered stretches follow at residues 1-56 and 203-222; these read MQET…HPGA and PAQL…EMEE. Low complexity predominate over residues 24 to 34; the sequence is SSTGGHTSSTG. The span at 35–49 shows a compositional bias: polar residues; that stretch reads PQPSKPSITPVSAKS. LRR repeat units follow at residues 308-321, 335-355, 363-383, 391-411, and 419-439; these read VLEE…LIGD, RLRV…QSLA, NLIS…QALA, CLTT…TLLS, and TLTS…KQLL.

This sequence belongs to the DRC5 family. In terms of assembly, component of the nexin-dynein regulatory complex (N-DRC). Interacts with DRC1. Interacts with FBXL13/DRC6, DRC3 and DRC7.

Its subcellular location is the cell projection. It localises to the cilium. The protein localises to the flagellum. It is found in the cytoplasm. The protein resides in the cytoskeleton. Its subcellular location is the flagellum axoneme. Functionally, component of the nexin-dynein regulatory complex (N-DRC) a key regulator of ciliary/flagellar motility which maintains the alignment and integrity of the distal axoneme and regulates microtubule sliding in motile axonemes. May play a role in the assembly of N-DRC. May be required for sperm motility. The chain is Dynein regulatory complex subunit 5 (TCTE1) from Macaca fascicularis (Crab-eating macaque).